The primary structure comprises 373 residues: Eukaryotic translation initiation factor 3 subunit M (373 aa).

Serine 2 bears the N-acetylserine mark. A phosphoserine mark is found at serine 2 and serine 152. In terms of domain architecture, PCI spans 180 to 338; it reads AASKVMVELL…RKVVVSHSTH (159 aa). Lysine 253 carries the post-translational modification N6-acetyllysine. Serine 366 carries the phosphoserine modification.

The protein belongs to the eIF-3 subunit M family. Component of the eukaryotic translation initiation factor 3 (eIF-3) complex, which is composed of 13 subunits: EIF3A, EIF3B, EIF3C, EIF3D, EIF3E, EIF3F, EIF3G, EIF3H, EIF3I, EIF3J, EIF3K, EIF3L and EIF3M. The eIF-3 complex appears to include 3 stable modules: module A is composed of EIF3A, EIF3B, EIF3G and EIF3I; module B is composed of EIF3F, EIF3H, and EIF3M; and module C is composed of EIF3C, EIF3D, EIF3E, EIF3K and EIF3L. EIF3C of module C binds EIF3B of module A and EIF3H of module B, thereby linking the three modules. EIF3J is a labile subunit that binds to the eIF-3 complex via EIF3B. The eIF-3 complex interacts with RPS6KB1 under conditions of nutrient depletion. Mitogenic stimulation leads to binding and activation of a complex composed of MTOR and RPTOR, leading to phosphorylation and release of RPS6KB1 and binding of EIF4B to eIF-3.

Its subcellular location is the cytoplasm. In terms of biological role, component of the eukaryotic translation initiation factor 3 (eIF-3) complex, which is required for several steps in the initiation of protein synthesis. The eIF-3 complex associates with the 40S ribosome and facilitates the recruitment of eIF-1, eIF-1A, eIF-2:GTP:methionyl-tRNAi and eIF-5 to form the 43S pre-initiation complex (43S PIC). The eIF-3 complex stimulates mRNA recruitment to the 43S PIC and scanning of the mRNA for AUG recognition. The eIF-3 complex is also required for disassembly and recycling of post-termination ribosomal complexes and subsequently prevents premature joining of the 40S and 60S ribosomal subunits prior to initiation. The eIF-3 complex specifically targets and initiates translation of a subset of mRNAs involved in cell proliferation, including cell cycling, differentiation and apoptosis, and uses different modes of RNA stem-loop binding to exert either translational activation or repression. This is Eukaryotic translation initiation factor 3 subunit M from Bos taurus (Bovine).